A 734-amino-acid polypeptide reads, in one-letter code: Photosystem I P700 chlorophyll a apoprotein A2 (734 aa).

8 helical membrane-spanning segments follow: residues 46–69 (IFAS…FHVA), 135–158 (LYQG…LHLQ), 175–199 (LNHH…HVAI), 273–291 (IAHH…GHMY), 330–353 (LHFQ…QHMY), 369–395 (AALY…IFLI), 417–439 (AIIS…LYVH), and 517–535 (FLVH…LILV). The [4Fe-4S] cluster site is built by Cys559 and Cys568. 2 helical membrane-spanning segments follow: residues 575-596 (AFYL…YWHW) and 643-665 (LSVW…MFLI). Residues His654, Met662, and Tyr670 each coordinate chlorophyll a. Trp671 lines the phylloquinone pocket. Residues 707–727 (VVGLAHFTVGYFLTYAAFLIA) form a helical membrane-spanning segment.

Belongs to the PsaA/PsaB family. As to quaternary structure, the PsaA/B heterodimer binds the P700 chlorophyll special pair and subsequent electron acceptors. PSI consists of a core antenna complex that captures photons, and an electron transfer chain that converts photonic excitation into a charge separation. The cyanobacterial PSI reaction center is composed of one copy each of PsaA,B,C,D,E,F,I,J,K,L,M and X, and forms trimeric complexes. PSI electron transfer chain: 5 chlorophyll a, 1 chlorophyll a', 2 phylloquinones and 3 4Fe-4S clusters. PSI core antenna: 90 chlorophyll a, 22 carotenoids, 3 phospholipids and 1 galactolipid. P700 is a chlorophyll a/chlorophyll a' dimer, A0 is one or more chlorophyll a, A1 is one or both phylloquinones and FX is a shared 4Fe-4S iron-sulfur center. serves as cofactor.

The protein localises to the cellular thylakoid membrane. It carries out the reaction reduced [plastocyanin] + hnu + oxidized [2Fe-2S]-[ferredoxin] = oxidized [plastocyanin] + reduced [2Fe-2S]-[ferredoxin]. In terms of biological role, psaA and PsaB bind P700, the primary electron donor of photosystem I (PSI), as well as the electron acceptors A0, A1 and FX. PSI is a plastocyanin/cytochrome c6-ferredoxin oxidoreductase, converting photonic excitation into a charge separation, which transfers an electron from the donor P700 chlorophyll pair to the spectroscopically characterized acceptors A0, A1, FX, FA and FB in turn. Oxidized P700 is reduced on the lumenal side of the thylakoid membrane by plastocyanin or cytochrome c6. The protein is Photosystem I P700 chlorophyll a apoprotein A2 of Synechococcus elongatus (strain ATCC 33912 / PCC 7942 / FACHB-805) (Anacystis nidulans R2).